Consider the following 273-residue polypeptide: Putative phosphoenolpyruvate synthase regulatory protein (273 aa).

ADP is bound at residue 153-160 (GVSRCGKT).

It belongs to the pyruvate, phosphate/water dikinase regulatory protein family. PSRP subfamily.

It catalyses the reaction [pyruvate, water dikinase] + ADP = [pyruvate, water dikinase]-phosphate + AMP + H(+). The catalysed reaction is [pyruvate, water dikinase]-phosphate + phosphate + H(+) = [pyruvate, water dikinase] + diphosphate. Its function is as follows. Bifunctional serine/threonine kinase and phosphorylase involved in the regulation of the phosphoenolpyruvate synthase (PEPS) by catalyzing its phosphorylation/dephosphorylation. This chain is Putative phosphoenolpyruvate synthase regulatory protein, found in Sodalis glossinidius (strain morsitans).